The chain runs to 416 residues: Enterobactin exporter EntS (416 aa).

At 1–21 (MNKQSWLLNLSLLKTHPAFRA) the chain is on the cytoplasmic side. The helical transmembrane segment at 22 to 42 (VFLARFISIVSLGLLGVAVPV) threads the bilayer. At 43–55 (QIQMMTHSTWQVG) the chain is on the periplasmic side. A helical membrane pass occupies residues 56-76 (LSVTLTGGAMFVGLMVGGVLA). Residues 77–83 (DRYERKK) lie on the Cytoplasmic side of the membrane. Residues 84–104 (VILLARGTCGIGFIGLCLNAL) traverse the membrane as a helical segment. Topologically, residues 105–109 (LPEPS) are periplasmic. A helical transmembrane segment spans residues 110–130 (LLAIYLLGLWDGFFASLGVTA). At 131–156 (LLAATPALVGRENLMQAGAITMLTVR) the chain is on the cytoplasmic side. Residues 157 to 177 (LGSVISPMIGGLLLATGGVAW) traverse the membrane as a helical segment. Asn178 is a topological domain (periplasmic). A helical membrane pass occupies residues 179-199 (YGLAAAGTFITLLPLLSLPAL). The Cytoplasmic segment spans residues 200–218 (PPPPQPREHPLKSLLAGFR). The helical transmembrane segment at 219–239 (FLLASPLVGGIALLGGLLTMA) threads the bilayer. Topologically, residues 240–256 (SAVRVLYPALADNWQMS) are periplasmic. A helical transmembrane segment spans residues 257-277 (AAQIGFLYAAIPLGAAIGALT). Topologically, residues 278-287 (SGKLAHSARP) are cytoplasmic. The helical transmembrane segment at 288-307 (GLLMLLSTLGSFLAIGLFGL) threads the bilayer. The Periplasmic segment spans residues 308-313 (MPMWIL). Residues 314–336 (GVVCLALFGWLSAVSSLLQYTML) form a helical membrane-spanning segment. Topologically, residues 337–356 (QTQTPEAMLGRINGLWTAQN) are cytoplasmic. A helical membrane pass occupies residues 357–377 (VTGDAIGAALLGGLGAMMTPV). Ala378 is a topological domain (periplasmic). The chain crosses the membrane as a helical span at residues 379 to 399 (SASASGFGLLIIGVLLLLVLV). Residues 400–416 (ELRRFRQTPPQMTASDS) are Cytoplasmic-facing.

Belongs to the major facilitator superfamily. EntS (TC 2.A.1.38) family.

The protein resides in the cell inner membrane. Functionally, component of an export pathway for enterobactin. In Escherichia coli O7:K1 (strain IAI39 / ExPEC), this protein is Enterobactin exporter EntS.